Reading from the N-terminus, the 285-residue chain is Phosphoribosylaminoimidazole-succinocarboxamide synthase (285 aa).

It belongs to the SAICAR synthetase family.

The enzyme catalyses 5-amino-1-(5-phospho-D-ribosyl)imidazole-4-carboxylate + L-aspartate + ATP = (2S)-2-[5-amino-1-(5-phospho-beta-D-ribosyl)imidazole-4-carboxamido]succinate + ADP + phosphate + 2 H(+). It functions in the pathway purine metabolism; IMP biosynthesis via de novo pathway; 5-amino-1-(5-phospho-D-ribosyl)imidazole-4-carboxamide from 5-amino-1-(5-phospho-D-ribosyl)imidazole-4-carboxylate: step 1/2. This Leptospira interrogans serogroup Icterohaemorrhagiae serovar copenhageni (strain Fiocruz L1-130) protein is Phosphoribosylaminoimidazole-succinocarboxamide synthase.